Reading from the N-terminus, the 329-residue chain is RING finger protein 225 (329 aa).

Positions 1 to 55 are disordered; the sequence is MPCPRPFWLRHSRAPQGSGPSSPGSLSAPRSPSRGEDQEEEEEEEGDGSPGSGPI. Low complexity predominate over residues 14–32; that stretch reads APQGSGPSSPGSLSAPRSP. Acidic residues predominate over residues 37 to 47; sequence DQEEEEEEEGD. The RING-type zinc-finger motif lies at 64-112; the sequence is CLICVSSFDGVFKLPKRLDCGHVFCLECLARLSLATAGGGNAVACPVCR. A disordered region spans residues 122–181; sequence GLPALPTQSGLLPRDARAPPSRQGSVRFDRRRGLLYLRPPPPPPGPRKARAPPPPPPLRL. Residues 159–179 are compositionally biased toward pro residues; that stretch reads RPPPPPPGPRKARAPPPPPPL. Residues 203-223 form a helical membrane-spanning segment; sequence ALAVLVAAGLVVSGVYIFFLI. Residues 248 to 329 form a disordered region; the sequence is FPPRPPPGSP…RGARRLWGSQ (82 aa). Acidic residues predominate over residues 281-293; sequence DALEPEAGPEDPA. Residues 294 to 304 are compositionally biased toward basic and acidic residues; that stretch reads EAERTLDRRSD.

Its subcellular location is the membrane. This chain is RING finger protein 225, found in Homo sapiens (Human).